The following is a 598-amino-acid chain: Pescadillo homolog (598 aa).

A disordered region spans residues 296 to 317 (QAMKADSKDKDDNSNDEAPENV). One can recognise a BRCT domain in the interval 345-439 (PTATLFEDFV…ELLSANLYLP (95 aa)). 3 disordered regions span residues 452–501 (DALG…EDVE), 515–544 (GIAY…EDEE), and 564–598 (MKYS…VEKK). Residues 463-485 (ESEDESSDSSEESDSEIENEEED) show a composition bias toward acidic residues. Composition is skewed to basic and acidic residues over residues 520–532 (KAKD…DVAS), 570–579 (QKEDKIEELK), and 586–598 (AKKE…VEKK). Residues 557–598 (QRKLYKKMKYSNQQKEDKIEELKKKKKQLAKKEKTLKKVEKK) are a coiled coil.

This sequence belongs to the pescadillo family. In terms of assembly, component of the NOP7 complex, composed of ERB1, NOP7 and YTM1. The complex is held together by ERB1, which interacts with NOP7 via its N-terminal domain and with YTM1 via a high-affinity interaction between the seven-bladed beta-propeller domains of the 2 proteins. The NOP7 complex associates with the 66S pre-ribosome.

It localises to the nucleus. The protein localises to the nucleolus. The protein resides in the nucleoplasm. Functionally, component of the NOP7 complex, which is required for maturation of the 25S and 5.8S ribosomal RNAs and formation of the 60S ribosome. The sequence is that of Pescadillo homolog from Candida glabrata (strain ATCC 2001 / BCRC 20586 / JCM 3761 / NBRC 0622 / NRRL Y-65 / CBS 138) (Yeast).